We begin with the raw amino-acid sequence, 192 residues long: Shikimate kinase (192 aa).

Residue 32-37 (GAGKSA) participates in ATP binding. A Mg(2+)-binding site is contributed by Ser36. 3 residues coordinate substrate: Asp54, Arg78, and Gly100. Residue Arg138 coordinates ATP. Arg157 is a binding site for substrate.

It belongs to the shikimate kinase family. Monomer. It depends on Mg(2+) as a cofactor.

The protein localises to the cytoplasm. The enzyme catalyses shikimate + ATP = 3-phosphoshikimate + ADP + H(+). It functions in the pathway metabolic intermediate biosynthesis; chorismate biosynthesis; chorismate from D-erythrose 4-phosphate and phosphoenolpyruvate: step 5/7. In terms of biological role, catalyzes the specific phosphorylation of the 3-hydroxyl group of shikimic acid using ATP as a cosubstrate. The sequence is that of Shikimate kinase from Rhizobium meliloti (strain 1021) (Ensifer meliloti).